A 248-amino-acid polypeptide reads, in one-letter code: Proteasome subunit alpha type-7 (248 aa).

An O-linked (GlcNAc) serine glycan is attached at serine 130. At tyrosine 153 the chain carries Phosphotyrosine; by ABL1 and ABL2. Residue lysine 227 is modified to N6-acetyllysine.

This sequence belongs to the peptidase T1A family. As to quaternary structure, the 26S proteasome consists of a 20S proteasome core and two 19S regulatory subunits. The 20S proteasome core is a barrel-shaped complex made of 28 subunits that are arranged in four stacked rings. The two outer rings are each formed by seven alpha subunits, and the two inner rings are formed by seven beta subunits. The proteolytic activity is exerted by three beta-subunits PSMB5, PSMB6 and PSMB7. PSMA7 interacts directly with the PSMG1-PSMG2 heterodimer which promotes 20S proteasome assembly. Interacts with HIF1A. Interacts with RAB7A. Interacts with PRKN. Interacts with ABL1 and ABL2. Interacts with EMAP2. Interacts with MAVS. Phosphorylation by ABL1 or ABL2 leads to an inhibition of proteasomal activity and cell cycle transition blocks. Detected in liver (at protein level).

It localises to the cytoplasm. Its subcellular location is the nucleus. Functionally, component of the 20S core proteasome complex involved in the proteolytic degradation of most intracellular proteins. This complex plays numerous essential roles within the cell by associating with different regulatory particles. Associated with two 19S regulatory particles, forms the 26S proteasome and thus participates in the ATP-dependent degradation of ubiquitinated proteins. The 26S proteasome plays a key role in the maintenance of protein homeostasis by removing misfolded or damaged proteins that could impair cellular functions, and by removing proteins whose functions are no longer required. Associated with the PA200 or PA28, the 20S proteasome mediates ubiquitin-independent protein degradation. This type of proteolysis is required in several pathways including spermatogenesis (20S-PA200 complex) or generation of a subset of MHC class I-presented antigenic peptides (20S-PA28 complex). The sequence is that of Proteasome subunit alpha type-7 (Psma7) from Mus musculus (Mouse).